A 158-amino-acid polypeptide reads, in one-letter code: MASVEKLPMLAEGYEKLTAELKALREERPRIVDAIEEARAHGDLSENAEYHAAKERQGQVEATIADLEDRVSRAQIIDPTTLSGDKIIFGATVTLLDDDEKPVKYQIVGPYEADAKKGMISYNSPLGKALIGRKVDEEIEVTVPSGDKFYLVQKIEFI.

The stretch at 5 to 75 (EKLPMLAEGY…DLEDRVSRAQ (71 aa)) forms a coiled coil.

It belongs to the GreA/GreB family.

Necessary for efficient RNA polymerase transcription elongation past template-encoded arresting sites. The arresting sites in DNA have the property of trapping a certain fraction of elongating RNA polymerases that pass through, resulting in locked ternary complexes. Cleavage of the nascent transcript by cleavage factors such as GreA or GreB allows the resumption of elongation from the new 3'terminus. GreA releases sequences of 2 to 3 nucleotides. In Novosphingobium aromaticivorans (strain ATCC 700278 / DSM 12444 / CCUG 56034 / CIP 105152 / NBRC 16084 / F199), this protein is Transcription elongation factor GreA.